A 521-amino-acid polypeptide reads, in one-letter code: Glutamyl-tRNA(Gln) amidotransferase subunit A, mitochondrial (521 aa).

Catalysis depends on charge relay system residues lysine 61 and serine 139. Serine 163 (acyl-ester intermediate) is an active-site residue.

Belongs to the amidase family. GatA subfamily. In terms of assembly, subunit of the heterotrimeric GatCAB amidotransferase (AdT) complex, composed of A, B and C subunits.

It localises to the mitochondrion. It carries out the reaction L-glutamyl-tRNA(Gln) + L-glutamine + ATP + H2O = L-glutaminyl-tRNA(Gln) + L-glutamate + ADP + phosphate + H(+). In terms of biological role, allows the formation of correctly charged Gln-tRNA(Gln) through the transamidation of misacylated Glu-tRNA(Gln) in the mitochondria. The reaction takes place in the presence of glutamine and ATP through an activated gamma-phospho-Glu-tRNA(Gln). The polypeptide is Glutamyl-tRNA(Gln) amidotransferase subunit A, mitochondrial (Ajellomyces capsulatus (strain G186AR / H82 / ATCC MYA-2454 / RMSCC 2432) (Darling's disease fungus)).